Reading from the N-terminus, the 417-residue chain is Vacuolar cation/proton exchanger 3 (417 aa).

The Cytoplasmic portion of the chain corresponds to 1-45; it reads MENPQIEMGAFKANGPQLQNGGLRSSMVQSWNLQRFVESALRSIR. Residues 46–66 form a helical membrane-spanning segment; the sequence is IVIFTSKLNLLLPFGPASIIL. Over 67-73 the chain is Extracellular; the sequence is HYTTSRH. Residues 74 to 94 traverse the membrane as a helical segment; that stretch reads GLVFLFSMLGITPLAERLGYA. The Cytoplasmic portion of the chain corresponds to 95-105; it reads TEQLAIYTGPT. The chain crosses the membrane as a helical span at residues 106–126; that stretch reads VGGLLNATFGNATEMIIAIYA. Positions 115–150 are cation selection; sequence GNATEMIIAIYALKNGMIRVVQQSLLGSILSNMLLV. Topologically, residues 127-140 are extracellular; the sequence is LKNGMIRVVQQSLL. A helical transmembrane segment spans residues 141 to 161; it reads GSILSNMLLVMGCAFFAGGIV. The Cytoplasmic portion of the chain corresponds to 162–173; the sequence is HRNKDQVFSKAT. A helical transmembrane segment spans residues 174–194; the sequence is AVVNSGLLLMAVMGLMFPAVL. At 195–207 the chain is on the extracellular side; it reads HFTHSEVRQGASE. The chain crosses the membrane as a helical span at residues 208 to 230; that stretch reads VSLSRFSSCIMLVAYASYLYFQL. The Cytoplasmic segment spans residues 231–258; the sequence is SGRNNAYSPIGSEEMPNEDAAEEDEESE. Residues 259 to 279 traverse the membrane as a helical segment; sequence IGMWESIAWLAMLTLWVSILS. Topologically, residues 280-291 are extracellular; that stretch reads EYLVNAIEGASD. A helical membrane pass occupies residues 292–312; sequence SLNLPVAFISVILLPIVGNAA. The tract at residues 309–344 is cation selection; sequence GNAAEHASAIMFAMKDKLDITLGVAIGSSTQISMFV. At 313 to 330 the chain is on the cytoplasmic side; that stretch reads EHASAIMFAMKDKLDITL. Residues 331–351 traverse the membrane as a helical segment; the sequence is GVAIGSSTQISMFVIPFCVVI. Topologically, residues 352-360 are extracellular; that stretch reads GWMMGQKMD. The chain crosses the membrane as a helical span at residues 361-381; the sequence is LNFQLFETATLFITVLVVAFM. Over 382–389 the chain is Cytoplasmic; that stretch reads LQDGVANY. The chain crosses the membrane as a helical span at residues 390-410; sequence LKGLMLILCYLIVAASFFVHV. Topologically, residues 411–417 are extracellular; that stretch reads DPQSSDD.

The protein belongs to the Ca(2+):cation antiporter (CaCA) (TC 2.A.19) family. Cation/proton exchanger (CAX) subfamily. Ubiquitous.

Its subcellular location is the vacuole membrane. Vacuolar cation/proton exchanger (CAX). Translocates Ca(2+) and other metal ions into vacuoles using the proton gradient formed by H(+)-ATPase and H(+)-pyrophosphatase. The chain is Vacuolar cation/proton exchanger 3 (CAX3) from Oryza sativa subsp. japonica (Rice).